A 187-amino-acid polypeptide reads, in one-letter code: Rusticyanin (187 aa).

The first 32 residues, 1–32, serve as a signal peptide directing secretion; the sequence is MYTQNTMKKNWYVTVGAAAALAATVGMGTAMA. The Plastocyanin-like domain maps to 85-187; that stretch reads SFEVHDKKNP…TGMFGKIIVK (103 aa). Cu cation-binding residues include His117, Cys170, His175, and Met180.

In terms of assembly, monomer. Cu cation serves as cofactor.

It localises to the periplasm. Functionally, electron carrier from cytochrome c552 to the A-type oxidase. The sequence is that of Rusticyanin (rus) from Acidithiobacillus ferridurans.